We begin with the raw amino-acid sequence, 159 residues long: Mating-type P-specific polypeptide Pi (159 aa).

Residues M103 to R159 constitute a DNA-binding region (homeobox; TALE-type; partial).

The protein belongs to the TALE/M-ATYP homeobox family.

Its subcellular location is the nucleus. Its function is as follows. Mating type proteins are sequence specific DNA-binding proteins that act as master switches in yeast differentiation by controlling gene expression in a cell type-specific fashion. Required for meiosis, but plays no role in conjugation. The chain is Mating-type P-specific polypeptide Pi (matPi) from Schizosaccharomyces kambucha (Fission yeast).